The following is a 322-amino-acid chain: MNYSALLDAISQGPLARWASILPEQIAEGLSEERYGDLPAWKTVLAQLPAITSSHTELAERVSIGAPGDCDETTREQLQSVLEALIPWRKGPYWIHGIHLDTEWRSDWKWDRVLPHLASLKDRLILDVGCGNGYHCWRMLGAGAKRVIGIDPSPRFVVQFHMIKQLAGLHYPVDVLPVGIEDLPEKLHAFDTVFSMGVFYHRRAPMDHLLELKNALRPGGQLVLETLVINGKEGDVLVPEGRYAMMNNVWFLPSCATLLSWLRKMGFKAPRVVDICPTTTEEQRSTHWMRFHSLPEFLHPENPALTAEGHPAPIRAVFVAEV.

Residues Lys90, Trp104, Lys109, Gly129, 151 to 153 (DPS), 180 to 181 (IE), Met196, Tyr200, and Arg315 each bind carboxy-S-adenosyl-L-methionine.

Belongs to the class I-like SAM-binding methyltransferase superfamily. CmoB family. As to quaternary structure, homotetramer.

It catalyses the reaction carboxy-S-adenosyl-L-methionine + 5-hydroxyuridine(34) in tRNA = 5-carboxymethoxyuridine(34) in tRNA + S-adenosyl-L-homocysteine + H(+). Catalyzes carboxymethyl transfer from carboxy-S-adenosyl-L-methionine (Cx-SAM) to 5-hydroxyuridine (ho5U) to form 5-carboxymethoxyuridine (cmo5U) at position 34 in tRNAs. This Cellvibrio japonicus (strain Ueda107) (Pseudomonas fluorescens subsp. cellulosa) protein is tRNA U34 carboxymethyltransferase.